We begin with the raw amino-acid sequence, 472 residues long: FAD-dependent monooxygenase dpmaE (472 aa).

The signal sequence occupies residues 1 to 24; sequence MSQRQFKVIIIGGSVTGLTLAHSL. Residues Glu-35, Gly-49, and Arg-108 each coordinate FAD. N-linked (GlcNAc...) asparagine glycans are attached at residues Asn-128 and Asn-179. FAD contacts are provided by Asp-305 and Ala-318. The N-linked (GlcNAc...) asparagine glycan is linked to Asn-369. Residues 440 to 460 form a helical membrane-spanning segment; that stretch reads LLPLMFTLPLLYFGLSWIVGI.

It belongs to the paxM FAD-dependent monooxygenase family. The cofactor is FAD.

It is found in the membrane. The protein operates within secondary metabolite biosynthesis; terpenoid biosynthesis. Functionally, FAD-dependent monooxygenase; part of the gene cluster that mediates the biosynthesis of the diterpenoid pyrones subglutinols A and B. The first step of the pathway is the synthesis of the alpha-pyrone moiety by the polyketide synthase dpmaA via condensation of one acetyl-CoA starter unit with 3 malonyl-CoA units and 2 methylations. The alpha-pyrone is then combined with geranylgeranyl pyrophosphate (GGPP) formed by the GGPP synthase dpmaD through the action of the prenyltransferase dpmaC to yield a linear alpha-pyrone diterpenoid. Subsequent steps in the diterpenoid pyrone biosynthetic pathway involve the decalin core formation, which is initiated by the epoxidation of the C10-C11 olefin by the FAD-dependent oxidoreductase dpmaE, and is followed by a cyclization cascade catalyzed by the terpene cyclase dpmaB. The dehydrogenase dpmaF is then involved in tetrahydrofuran (THF) ring formation at the C5 unit to complete the formation of subglutinols A and B. The sequence is that of FAD-dependent monooxygenase dpmaE from Metarhizium anisopliae (Entomophthora anisopliae).